We begin with the raw amino-acid sequence, 188 residues long: Elongation factor P-like protein (188 aa).

The protein belongs to the elongation factor P family.

The sequence is that of Elongation factor P-like protein from Vibrio cholerae serotype O1 (strain ATCC 39541 / Classical Ogawa 395 / O395).